The chain runs to 253 residues: 3-dehydroquinate dehydratase (253 aa).

3-dehydroquinate contacts are provided by residues 46-48 (EWR) and Arg-82. The active-site Proton donor/acceptor is His-143. The Schiff-base intermediate with substrate role is filled by Lys-170. 3-dehydroquinate-binding residues include Arg-213, Ser-232, and Gln-236.

It belongs to the type-I 3-dehydroquinase family. As to quaternary structure, homodimer.

The catalysed reaction is 3-dehydroquinate = 3-dehydroshikimate + H2O. It functions in the pathway metabolic intermediate biosynthesis; chorismate biosynthesis; chorismate from D-erythrose 4-phosphate and phosphoenolpyruvate: step 3/7. With respect to regulation, inhibited by flavonoids such as datiscetin, naringenin, marein and phloretin. In terms of biological role, involved in the third step of the chorismate pathway, which leads to the biosynthesis of aromatic amino acids (AroAA). Catalyzes the cis-dehydration of 3-dehydroquinate (DHQ) and introduces the first double bond of the aromatic ring to yield 3-dehydroshikimate. The reaction involves the formation of an imine intermediate between the keto group of 3-dehydroquinate and the epsilon-amino group of Lys-170 at the active site. This chain is 3-dehydroquinate dehydratase, found in Enterococcus faecalis (strain ATCC 700802 / V583).